The primary structure comprises 282 residues: NFU1 iron-sulfur cluster scaffold homolog, mitochondrial (282 aa).

A mitochondrion-targeting transit peptide spans 1–27 (MSKLLSYTARIILRNSRITVRQLVRGF). The tract at residues 178-246 (IKELLDTRIR…IPEVESVEQV (69 aa)) is nifU. The [4Fe-4S] cluster site is built by C215 and C218. The segment at 263 to 282 (KNLKQKEPAGAPVGIGGGPN) is disordered.

The protein belongs to the NifU family.

Its subcellular location is the mitochondrion. Its function is as follows. Molecular scaffold for [Fe-S] cluster assembly of mitochondrial iron-sulfur proteins. The polypeptide is NFU1 iron-sulfur cluster scaffold homolog, mitochondrial (Drosophila persimilis (Fruit fly)).